The sequence spans 164 residues: MSMSLLNDVQKFIEAHPGCTSGDIADAFAGYSRQRVLQSASKLRQSGRVAHRCEGDTHRHFPRLTERAQDPEPQPVRETRPVRNFYVGTNDPRVILCLTRQAEELESRGLYRRAATVWMAAFRESHSQPERNNFLARRERCLRKSSKRAASGEEWYLSGNYVGA.

This is an uncharacterized protein from Escherichia coli (strain K12).